The following is a 337-amino-acid chain: uncharacterized protein (337 aa).

Residues Pro22–Ile76 form the F-box domain.

This is an uncharacterized protein from Caenorhabditis elegans.